Reading from the N-terminus, the 111-residue chain is Nucleoid-associated protein CYA_1369 (111 aa).

It belongs to the YbaB/EbfC family. In terms of assembly, homodimer.

The protein resides in the cytoplasm. The protein localises to the nucleoid. Binds to DNA and alters its conformation. May be involved in regulation of gene expression, nucleoid organization and DNA protection. The chain is Nucleoid-associated protein CYA_1369 from Synechococcus sp. (strain JA-3-3Ab) (Cyanobacteria bacterium Yellowstone A-Prime).